Consider the following 438-residue polypeptide: tRNA modification GTPase MnmE (438 aa).

Positions 20, 78, and 117 each coordinate (6S)-5-formyl-5,6,7,8-tetrahydrofolate. Positions 214 to 359 (GIRVLIIGKP…LIDEIKKLFY (146 aa)) constitute a TrmE-type G domain. Asn-224 provides a ligand contact to K(+). GTP contacts are provided by residues 224 to 229 (NVGKST), 243 to 249 (TDIPGTT), and 268 to 271 (DTAG). Position 228 (Ser-228) interacts with Mg(2+). Positions 243, 245, and 248 each coordinate K(+). Thr-249 contacts Mg(2+). Lys-438 is a (6S)-5-formyl-5,6,7,8-tetrahydrofolate binding site.

It belongs to the TRAFAC class TrmE-Era-EngA-EngB-Septin-like GTPase superfamily. TrmE GTPase family. Homodimer. Heterotetramer of two MnmE and two MnmG subunits. K(+) serves as cofactor.

It localises to the cytoplasm. Exhibits a very high intrinsic GTPase hydrolysis rate. Involved in the addition of a carboxymethylaminomethyl (cmnm) group at the wobble position (U34) of certain tRNAs, forming tRNA-cmnm(5)s(2)U34. This Ureaplasma parvum serovar 3 (strain ATCC 27815 / 27 / NCTC 11736) protein is tRNA modification GTPase MnmE.